Here is a 216-residue protein sequence, read N- to C-terminus: DNA gyrase subunit B (216 aa).

In terms of domain architecture, Toprim spans 140–216; that stretch reads SELYLVEGDS…PDKLRYHKII (77 aa).

Belongs to the type II topoisomerase GyrB family. In terms of assembly, heterotetramer, composed of two GyrA and two GyrB chains. In the heterotetramer, GyrA contains the active site tyrosine that forms a transient covalent intermediate with DNA, while GyrB binds cofactors and catalyzes ATP hydrolysis.

It is found in the cytoplasm. It catalyses the reaction ATP-dependent breakage, passage and rejoining of double-stranded DNA.. In terms of biological role, a type II topoisomerase that negatively supercoils closed circular double-stranded (ds) DNA in an ATP-dependent manner to modulate DNA topology and maintain chromosomes in an underwound state. Negative supercoiling favors strand separation, and DNA replication, transcription, recombination and repair, all of which involve strand separation. Also able to catalyze the interconversion of other topological isomers of dsDNA rings, including catenanes and knotted rings. Type II topoisomerases break and join 2 DNA strands simultaneously in an ATP-dependent manner. This Acinetobacter sp. (strain T4) protein is DNA gyrase subunit B (gyrB).